Here is a 524-residue protein sequence, read N- to C-terminus: Solute carrier family 35 member F5 (524 aa).

Helical transmembrane passes span 69–89 (MALGIVILLLVDVIWVASSEL) and 101–121 (FFSTFAKTSMFVLYLLGFIIW). Serine 207 carries the post-translational modification Phosphoserine. Transmembrane regions (helical) follow at residues 244 to 264 (ISFFFCFVWFLANLSYQEALS), 269 to 289 (AIVNILSSTSGLFTLILAAVF), 297 to 317 (FTLSKLLAVILSIGGVVLVNL), 328 to 348 (TIGSIWSLAGAMFYAVYIVMI), 362 to 382 (MFFGFVGLFNLLLLWPGFFLL), 396 to 416 (VVLLCIIINGLIGTVLSEFLW), 421 to 441 (FLTSSLIGTLALSLTIPLSII), and 453 to 473 (WLFFAGAIPVFFSFFIVTLLC). Positions 253–317 (FLANLSYQEA…SIGGVVLVNL (65 aa)) constitute an EamA domain.

It belongs to the SLC35F solute transporter family.

It is found in the membrane. Putative solute transporter. The chain is Solute carrier family 35 member F5 (Slc35f5) from Mus musculus (Mouse).